We begin with the raw amino-acid sequence, 94 residues long: Co-chaperonin GroES (94 aa).

This sequence belongs to the GroES chaperonin family. In terms of assembly, heptamer of 7 subunits arranged in a ring. Interacts with the chaperonin GroEL.

It is found in the cytoplasm. Functionally, together with the chaperonin GroEL, plays an essential role in assisting protein folding. The GroEL-GroES system forms a nano-cage that allows encapsulation of the non-native substrate proteins and provides a physical environment optimized to promote and accelerate protein folding. GroES binds to the apical surface of the GroEL ring, thereby capping the opening of the GroEL channel. The polypeptide is Co-chaperonin GroES (Listeria innocua serovar 6a (strain ATCC BAA-680 / CLIP 11262)).